Reading from the N-terminus, the 109-residue chain is Putative antitoxin HigA3 (109 aa).

One can recognise an HTH cro/C1-type domain in the interval 41-97 (LAEIRKALGHARQADVAALMGVSQARVSKLESGDLSHTELGTLQAYVAALGGHLRIV). Positions 53–72 (QADVAALMGVSQARVSKLES) form a DNA-binding region, H-T-H motif.

Putative antitoxin component of a type II toxin-antitoxin (TA) system. Its cognate toxin would be HigB3. The chain is Putative antitoxin HigA3 from Mycobacterium tuberculosis (strain ATCC 25618 / H37Rv).